Reading from the N-terminus, the 243-residue chain is Vesicle-associated membrane protein-associated protein B (243 aa).

At A2 the chain carries N-acetylalanine. Residues 2-218 (AKVEQVLSLE…AALAASGKEE (217 aa)) lie on the Cytoplasmic side of the membrane. In terms of domain architecture, MSP spans 7–124 (VLSLEPQHEL…MDSKLRCVFE (118 aa)). The residue at position 146 (S146) is a Phosphoserine. A Glycyl lysine isopeptide (Lys-Gly) (interchain with G-Cter in SUMO1) cross-link involves residue K147. S159 carries the phosphoserine modification. A coiled-coil region spans residues 161–196 (LDDAEVKKVMEECRRLQGEVQRLREESRQLKEEDGL). S206 carries the phosphoserine modification. A helical; Anchor for type IV membrane protein membrane pass occupies residues 219–239 (GLSARLLALVVLFFIVGVIIG).

Belongs to the VAMP-associated protein (VAP) (TC 9.B.17) family. Homodimer, and heterodimer with VAPA. Interacts with VAMP1 and VAMP2. Interacts (via MSP domain) with ZFYVE27. Interacts with RMDN3. Interacts with KIF5A in a ZFYVE27-dependent manner. Interacts (via MSP domain) with STARD3 (via phospho-FFAT motif). Interacts with STARD3NL (via FFAT motif). Interacts with CERT1. Interacts with PLEKHA3 and SACM1L to form a ternary complex. Interacts with VPS13A (via FFAT motif). Interacts with RB1CC1 (via phosphorylated FFAT motif), MIGA2 (via phosphorylated FFAT motif), RMDN3 (via phosphorylated FFAT motif), OSBPL1A (via FFAT motif), KCNB1 (via phosphorylated FFAT motif) and KCNB2 (via phosphorylated FFAT motif). Interacts (via MSP domain) with WDR44; the interactions connect the endoplasmic reticulum (ER) with the endosomal tubule. In terms of tissue distribution, ubiquitous.

It is found in the endoplasmic reticulum membrane. In terms of biological role, endoplasmic reticulum (ER)-anchored protein that mediates the formation of contact sites between the ER and endosomes via interaction with FFAT motif-containing proteins such as STARD3 or WDR44. Interacts with STARD3 in a FFAT motif phosphorylation dependent manner. Via interaction with WDR44 participates in neosynthesized protein export. Participates in the endoplasmic reticulum unfolded protein response (UPR) by inducing ERN1/IRE1 activity. Involved in cellular calcium homeostasis regulation. The protein is Vesicle-associated membrane protein-associated protein B of Rattus norvegicus (Rat).